The sequence spans 349 residues: S-adenosylmethionine:tRNA ribosyltransferase-isomerase (349 aa).

This sequence belongs to the QueA family. Monomer.

The protein resides in the cytoplasm. The catalysed reaction is 7-aminomethyl-7-carbaguanosine(34) in tRNA + S-adenosyl-L-methionine = epoxyqueuosine(34) in tRNA + adenine + L-methionine + 2 H(+). Its pathway is tRNA modification; tRNA-queuosine biosynthesis. In terms of biological role, transfers and isomerizes the ribose moiety from AdoMet to the 7-aminomethyl group of 7-deazaguanine (preQ1-tRNA) to give epoxyqueuosine (oQ-tRNA). The protein is S-adenosylmethionine:tRNA ribosyltransferase-isomerase of Pseudomonas putida (strain W619).